Here is a 328-residue protein sequence, read N- to C-terminus: uncharacterized protein (328 aa).

Residues 37–179 enclose the SIS domain; that stretch reads LTEKLLCHQG…AMTLLRCRKI (143 aa). 52 to 57 provides a ligand contact to ATP; it reads GIGKSG. CBS domains lie at 207-264 and 273-328; these read PRTE…GGDI and MTRN…AGLL.

This sequence belongs to the SIS family. GutQ/KpsF subfamily.

This is an uncharacterized protein from Chlamydia trachomatis serovar D (strain ATCC VR-885 / DSM 19411 / UW-3/Cx).